Here is a 147-residue protein sequence, read N- to C-terminus: D-aminoacyl-tRNA deacylase (147 aa).

The short motif at 136 to 137 is the Gly-cisPro motif, important for rejection of L-amino acids element; the sequence is GP.

It belongs to the DTD family. Homodimer.

The protein localises to the cytoplasm. The enzyme catalyses glycyl-tRNA(Ala) + H2O = tRNA(Ala) + glycine + H(+). It carries out the reaction a D-aminoacyl-tRNA + H2O = a tRNA + a D-alpha-amino acid + H(+). Its function is as follows. An aminoacyl-tRNA editing enzyme that deacylates mischarged D-aminoacyl-tRNAs. Also deacylates mischarged glycyl-tRNA(Ala), protecting cells against glycine mischarging by AlaRS. Acts via tRNA-based rather than protein-based catalysis; rejects L-amino acids rather than detecting D-amino acids in the active site. By recycling D-aminoacyl-tRNA to D-amino acids and free tRNA molecules, this enzyme counteracts the toxicity associated with the formation of D-aminoacyl-tRNA entities in vivo and helps enforce protein L-homochirality. This chain is D-aminoacyl-tRNA deacylase, found in Streptococcus pyogenes serotype M6 (strain ATCC BAA-946 / MGAS10394).